We begin with the raw amino-acid sequence, 260 residues long: Phosphate import ATP-binding protein PstB (260 aa).

Residues isoleucine 14–isoleucine 255 form the ABC transporter domain. Glycine 46–serine 53 lines the ATP pocket.

It belongs to the ABC transporter superfamily. Phosphate importer (TC 3.A.1.7) family. As to quaternary structure, the complex is composed of two ATP-binding proteins (PstB), two transmembrane proteins (PstC and PstA) and a solute-binding protein (PstS).

It localises to the cell inner membrane. The enzyme catalyses phosphate(out) + ATP + H2O = ADP + 2 phosphate(in) + H(+). Its function is as follows. Part of the ABC transporter complex PstSACB involved in phosphate import. Responsible for energy coupling to the transport system. This is Phosphate import ATP-binding protein PstB from Borreliella burgdorferi (strain ATCC 35210 / DSM 4680 / CIP 102532 / B31) (Borrelia burgdorferi).